The primary structure comprises 165 residues: uncharacterized protein (165 aa).

The region spanning 8–159 (LLVNYKTLEE…QGVQEQTTKP (152 aa)) is the N-acetyltransferase domain.

This is an uncharacterized protein from Shouchella clausii (strain KSM-K16) (Alkalihalobacillus clausii).